The chain runs to 323 residues: Phospho-N-acetylmuramoyl-pentapeptide-transferase (323 aa).

A run of 9 helical transmembrane segments spans residues 12-32 (IVMA…IIIP), 58-78 (PTIG…VMVG), 84-104 (AMIA…DDLL), 120-140 (MILL…YIGT), 151-171 (INLG…VTNA), 177-197 (GLDG…GIIS), 200-220 (LGHI…LAFL), 229-250 (VFMG…ALIL), and 303-323 (KIVS…FASL).

The protein belongs to the glycosyltransferase 4 family. MraY subfamily. Requires Mg(2+) as cofactor.

It localises to the cell membrane. It catalyses the reaction UDP-N-acetyl-alpha-D-muramoyl-L-alanyl-gamma-D-glutamyl-meso-2,6-diaminopimeloyl-D-alanyl-D-alanine + di-trans,octa-cis-undecaprenyl phosphate = di-trans,octa-cis-undecaprenyl diphospho-N-acetyl-alpha-D-muramoyl-L-alanyl-D-glutamyl-meso-2,6-diaminopimeloyl-D-alanyl-D-alanine + UMP. It functions in the pathway cell wall biogenesis; peptidoglycan biosynthesis. Its function is as follows. Catalyzes the initial step of the lipid cycle reactions in the biosynthesis of the cell wall peptidoglycan: transfers peptidoglycan precursor phospho-MurNAc-pentapeptide from UDP-MurNAc-pentapeptide onto the lipid carrier undecaprenyl phosphate, yielding undecaprenyl-pyrophosphoryl-MurNAc-pentapeptide, known as lipid I. The sequence is that of Phospho-N-acetylmuramoyl-pentapeptide-transferase from Clostridium perfringens (strain SM101 / Type A).